The primary structure comprises 72 residues: Seed trypsin/chymotrypsin inhibitor IVB (72 aa).

Cystine bridges form between Cys-8–Cys-61, Cys-9–Cys-24, Cys-12–Cys-57, Cys-14–Cys-22, Cys-31–Cys-38, Cys-35–Cys-50, and Cys-40–Cys-48.

It belongs to the Bowman-Birk serine protease inhibitor family. As to expression, seed.

Functionally, inhibitor of trypsin and of chymotrypsin. May function as a natural phytochemical defense against predators. This chain is Seed trypsin/chymotrypsin inhibitor IVB, found in Pisum sativum (Garden pea).